Consider the following 293-residue polypeptide: Pyridoxal 5'-phosphate synthase subunit PdxS (293 aa).

Residue Asp23 coordinates D-ribose 5-phosphate. Catalysis depends on Lys80, which acts as the Schiff-base intermediate with D-ribose 5-phosphate. Gly152 contributes to the D-ribose 5-phosphate binding site. Residue Arg164 participates in D-glyceraldehyde 3-phosphate binding. D-ribose 5-phosphate is bound by residues Gly213 and 234–235 (GS).

It belongs to the PdxS/SNZ family. As to quaternary structure, in the presence of PdxT, forms a dodecamer of heterodimers.

The catalysed reaction is aldehydo-D-ribose 5-phosphate + D-glyceraldehyde 3-phosphate + L-glutamine = pyridoxal 5'-phosphate + L-glutamate + phosphate + 3 H2O + H(+). It functions in the pathway cofactor biosynthesis; pyridoxal 5'-phosphate biosynthesis. Functionally, catalyzes the formation of pyridoxal 5'-phosphate from ribose 5-phosphate (RBP), glyceraldehyde 3-phosphate (G3P) and ammonia. The ammonia is provided by the PdxT subunit. Can also use ribulose 5-phosphate and dihydroxyacetone phosphate as substrates, resulting from enzyme-catalyzed isomerization of RBP and G3P, respectively. The polypeptide is Pyridoxal 5'-phosphate synthase subunit PdxS (Methanothermobacter thermautotrophicus (strain ATCC 29096 / DSM 1053 / JCM 10044 / NBRC 100330 / Delta H) (Methanobacterium thermoautotrophicum)).